Reading from the N-terminus, the 114-residue chain is Large ribosomal subunit protein P2 (114 aa).

Positions 76 to 91 are enriched in low complexity; the sequence is PAAAAAAGGGDSSSAA. The disordered stretch occupies residues 76 to 114; that stretch reads PAAAAAAGGGDSSSAAKETKKEEPEEEEEDGDMGLSLFD.

The protein belongs to the eukaryotic ribosomal protein P1/P2 family. P1 and P2 exist as dimers at the large ribosomal subunit. Phosphorylated.

Plays an important role in the elongation step of protein synthesis. This Eimeria tenella (Coccidian parasite) protein is Large ribosomal subunit protein P2.